Reading from the N-terminus, the 447-residue chain is N-succinylarginine dihydrolase (447 aa).

Residues 19 to 28 (AGLSFGNEAS), Asn110, and 137 to 138 (HR) each bind substrate. The active site involves Glu174. Arg212 is a substrate binding site. His248 is a catalytic residue. Substrate-binding residues include Asp250 and Asn359. Cys365 functions as the Nucleophile in the catalytic mechanism.

It belongs to the succinylarginine dihydrolase family. Homodimer.

The catalysed reaction is N(2)-succinyl-L-arginine + 2 H2O + 2 H(+) = N(2)-succinyl-L-ornithine + 2 NH4(+) + CO2. It functions in the pathway amino-acid degradation; L-arginine degradation via AST pathway; L-glutamate and succinate from L-arginine: step 2/5. In terms of biological role, catalyzes the hydrolysis of N(2)-succinylarginine into N(2)-succinylornithine, ammonia and CO(2). The sequence is that of N-succinylarginine dihydrolase from Salmonella enteritidis PT4 (strain P125109).